The primary structure comprises 383 residues: Na(+)/H(+) antiporter NhaA (383 aa).

Transmembrane regions (helical) follow at residues 21–41 (AAGVMLMAASAIGMVFANSIW), 56–76 (LTMRGWINDALMALFFLLAGL), 94–114 (LLPGVAAIGGMVVPAIIYVAF), 123–143 (GWAIPTATDIAFALGVLALAG), 152–172 (VFLTALAIVDDLGAVIVIALF), 175–195 (GTLSVLPGAGVAAILGLLLML), 202–222 (TLFPYLLAGVPLWWLTLKSGI), 258–278 (FVILPLFGFANAGISLHGVTV), 287–307 (LGVGAALMLGKPLGVLGAVSI), 326–346 (IGIAFLCGIGFTMSLFIAILA), and 355–375 (QIKLGILSGSMLSGLCGYILL).

The protein belongs to the NhaA Na(+)/H(+) (TC 2.A.33) antiporter family.

The protein localises to the cell inner membrane. It carries out the reaction Na(+)(in) + 2 H(+)(out) = Na(+)(out) + 2 H(+)(in). Its function is as follows. Na(+)/H(+) antiporter that extrudes sodium in exchange for external protons. The chain is Na(+)/H(+) antiporter NhaA from Granulibacter bethesdensis (strain ATCC BAA-1260 / CGDNIH1).